Here is a 340-residue protein sequence, read N- to C-terminus: MAESYKQSGVDIHAGYEAVERMKKHVNKTMRKEVLGGLGSFGAAFDLSQLNMKAPVLVSGTDGVGTKLRLAIDSDRHDTIGIDAVAMCVNDILTTGAMPLYFLDYLALNKVDPVIVEQIVKGVADGCAESECALIGGETAEMGDMYHTGDYDIAGFAVGAVEKDAYITGERIAEGDVILGLASSGIHSNGYSLVRKIIKDNNLDLDAEFDNGKTLLDVVLEPTRLYVKSAKAILDAADVHGMCHVTGGGFIENVPRVFVTDGLYPEIDVTNIPRQKIFDLLQEKGSIDKMEMYNIFNMGIGFIFIVPREAVEKVRSAVNEEVFEIGRVVRGDKAIDIKGV.

This sequence belongs to the AIR synthase family.

It is found in the cytoplasm. It catalyses the reaction 2-formamido-N(1)-(5-O-phospho-beta-D-ribosyl)acetamidine + ATP = 5-amino-1-(5-phospho-beta-D-ribosyl)imidazole + ADP + phosphate + H(+). It participates in purine metabolism; IMP biosynthesis via de novo pathway; 5-amino-1-(5-phospho-D-ribosyl)imidazole from N(2)-formyl-N(1)-(5-phospho-D-ribosyl)glycinamide: step 2/2. The sequence is that of Phosphoribosylformylglycinamidine cyclo-ligase from Macrococcus caseolyticus (strain JCSC5402) (Macrococcoides caseolyticum).